A 411-amino-acid polypeptide reads, in one-letter code: Na(+)-translocating NADH-quinone reductase subunit F (411 aa).

The helical transmembrane segment at A6–A26 threads the bilayer. A 2Fe-2S ferredoxin-type domain is found at G35–F129. [2Fe-2S] cluster contacts are provided by C72, C78, C81, and C113. Residues V132–K273 form the FAD-binding FR-type domain.

The protein belongs to the NqrF family. As to quaternary structure, composed of six subunits; NqrA, NqrB, NqrC, NqrD, NqrE and NqrF. It depends on [2Fe-2S] cluster as a cofactor. Requires FAD as cofactor.

Its subcellular location is the cell inner membrane. It catalyses the reaction a ubiquinone + n Na(+)(in) + NADH + H(+) = a ubiquinol + n Na(+)(out) + NAD(+). In terms of biological role, NQR complex catalyzes the reduction of ubiquinone-1 to ubiquinol by two successive reactions, coupled with the transport of Na(+) ions from the cytoplasm to the periplasm. The first step is catalyzed by NqrF, which accepts electrons from NADH and reduces ubiquinone-1 to ubisemiquinone by a one-electron transfer pathway. This Psychrobacter cryohalolentis (strain ATCC BAA-1226 / DSM 17306 / VKM B-2378 / K5) protein is Na(+)-translocating NADH-quinone reductase subunit F.